Reading from the N-terminus, the 84-residue chain is Anaphase-promoting complex subunit 11 (84 aa).

The Zn(2+) site is built by Cys23, Cys26, Cys34, Cys37, Cys44, Cys51, His53, His56, His58, Cys59, Cys73, and Cys76. The RING-type zinc finger occupies 34-77 (CPDCKVPGDDCPLVWGQCSHCFHMHCILKWLNAQQVQQHCPMCR).

This sequence belongs to the RING-box family. In terms of assembly, the mammalian APC/C is composed at least of 14 distinct subunits ANAPC1, ANAPC2, CDC27/APC3, ANAPC4, ANAPC5, CDC16/APC6, ANAPC7, CDC23/APC8, ANAPC10, ANAPC11, CDC26/APC12, ANAPC13, ANAPC15 and ANAPC16 that assemble into a complex of at least 19 chains with a combined molecular mass of around 1.2 MDa; APC/C interacts with FZR1 and FBXO5. Interacts with the cullin domain of ANAPC2. Interacts with UBE2D2. Post-translationally, auto-ubiquitinated.

The protein resides in the cytoplasm. It is found in the nucleus. The protein operates within protein modification; protein ubiquitination. Its function is as follows. Together with the cullin protein ANAPC2, constitutes the catalytic component of the anaphase promoting complex/cyclosome (APC/C), a cell cycle-regulated E3 ubiquitin ligase that controls progression through mitosis and the G1 phase of the cell cycle. The APC/C complex acts by mediating ubiquitination and subsequent degradation of target proteins: it mainly mediates the formation of 'Lys-11'-linked polyubiquitin chains and, to a lower extent, the formation of 'Lys-48'- and 'Lys-63'-linked polyubiquitin chains. The APC/C complex catalyzes assembly of branched 'Lys-11'-/'Lys-48'-linked branched ubiquitin chains on target proteins. May recruit the E2 ubiquitin-conjugating enzymes to the complex. The chain is Anaphase-promoting complex subunit 11 (Anapc11) from Mus musculus (Mouse).